The primary structure comprises 75 residues: Serine rich endogenous peptide 4 (75 aa).

Positions 1–31 (MATKTSNLGHLLLSLFILLLFILSQVGVAQA) are cleaved as a signal peptide. A disordered region spans residues 51–75 (PPPLRGIVKPPIASFHSASPKDKGP). The SCOOP motif motif lies at 61–75 (PIASFHSASPKDKGP). The short motif at 67-69 (SAS) is the SxS motif essential for MIK2 binding element.

It belongs to the serine rich endogenous peptide (SCOOP) phytocytokine family. As to quaternary structure, interacts with MIK2 (via extracellular leucine-rich repeat domain); this interaction triggers the formation of complex between MIK2 and the BAK1/SERK3 and SERK4 coreceptors, and subsequent BAK1 activation by phosphorylation. In terms of tissue distribution, mostly expressed in leaves and seedlings shoots, and, to a lower extent, in roots, stems, siliques, seeds and flowers.

It localises to the cell membrane. It is found in the secreted. Its subcellular location is the extracellular space. The protein localises to the apoplast. Brassicaceae-specific phytocytokine (plant endogenous peptide released into the apoplast) perceived by MIK2 in a BAK1/SERK3 and SERK4 coreceptors-dependent manner, that modulates various physiological and antimicrobial processes including growth prevention and reactive oxygen species (ROS) response regulation. Inhibits root growth. Prevents general growth and development. Exhibits antibacterial effects against Pseudomonas syringae pv. tomato DC3000, Ralstonia solanacearum, Bacillus subtilis and Agrobacterium tumefaciens, thus being an antimicrobial peptide (AMP). This chain is Serine rich endogenous peptide 4, found in Arabidopsis thaliana (Mouse-ear cress).